Here is a 339-residue protein sequence, read N- to C-terminus: GTPase Obg (339 aa).

An Obg domain is found at 1–158 (MKFLDQVDLR…RDLTFELKLM (158 aa)). Disordered regions lie at residues 66 to 86 (FAEDGEPGGRREQTGASGEDK) and 125 to 148 (GNAFFKSSTNQAPRESQPGEPGEE). The segment covering 72–86 (PGGRREQTGASGEDK) has biased composition (basic and acidic residues). Residues 129–138 (FKSSTNQAPR) are compositionally biased toward polar residues. An OBG-type G domain is found at 159-329 (ADVGLVGFPN…LKYTLFDTVH (171 aa)). GTP-binding positions include 165-172 (GFPNAGKS), 190-194 (FTTLT), 212-215 (DIPG), 279-282 (SKID), and 310-312 (SAV). Residues serine 172 and threonine 192 each contribute to the Mg(2+) site.

This sequence belongs to the TRAFAC class OBG-HflX-like GTPase superfamily. OBG GTPase family. As to quaternary structure, monomer. It depends on Mg(2+) as a cofactor.

Its subcellular location is the cytoplasm. Its function is as follows. An essential GTPase which binds GTP, GDP and possibly (p)ppGpp with moderate affinity, with high nucleotide exchange rates and a fairly low GTP hydrolysis rate. Plays a role in control of the cell cycle, stress response, ribosome biogenesis and in those bacteria that undergo differentiation, in morphogenesis control. The polypeptide is GTPase Obg (Salinibacter ruber (strain DSM 13855 / M31)).